Reading from the N-terminus, the 433-residue chain is uncharacterized protein (433 aa).

Belongs to the mimivirus R160 family.

Its subcellular location is the virion. This is an uncharacterized protein from Acanthamoeba polyphaga mimivirus (APMV).